The primary structure comprises 518 residues: Glucan 1,4-alpha-maltohexaosidase (518 aa).

The first 33 residues, M1–A33, serve as a signal peptide directing secretion. Residues N139, D196, A219, D221, D232, D238, D240, and D242 each coordinate Ca(2+). D196 is a binding site for Na(+). Na(+) contacts are provided by D221, D232, and D238. The active-site Nucleophile is D269. H273 contacts Ca(2+). Catalysis depends on E299, which acts as the Proton donor.

Belongs to the glycosyl hydrolase 13 family. The cofactor is Ca(2+). Requires Na(+) as cofactor.

The protein resides in the secreted. The catalysed reaction is Hydrolysis of (1-&gt;4)-alpha-D-glucosidic linkages in amylaceous polysaccharides, to remove successive maltohexaose residues from the non-reducing chain ends.. It participates in glycan degradation; starch degradation. In Bacillus sp. (strain 707), this protein is Glucan 1,4-alpha-maltohexaosidase.